Consider the following 354-residue polypeptide: UDP-N-acetylglucosamine--N-acetylmuramyl-(pentapeptide) pyrophosphoryl-undecaprenol N-acetylglucosamine transferase (354 aa).

Residues 11–13 (TAG), Arg-164, Ser-194, and Gln-289 each bind UDP-N-acetyl-alpha-D-glucosamine.

Belongs to the glycosyltransferase 28 family. MurG subfamily.

It is found in the cell membrane. It carries out the reaction di-trans,octa-cis-undecaprenyl diphospho-N-acetyl-alpha-D-muramoyl-L-alanyl-D-glutamyl-meso-2,6-diaminopimeloyl-D-alanyl-D-alanine + UDP-N-acetyl-alpha-D-glucosamine = di-trans,octa-cis-undecaprenyl diphospho-[N-acetyl-alpha-D-glucosaminyl-(1-&gt;4)]-N-acetyl-alpha-D-muramoyl-L-alanyl-D-glutamyl-meso-2,6-diaminopimeloyl-D-alanyl-D-alanine + UDP + H(+). The protein operates within cell wall biogenesis; peptidoglycan biosynthesis. Functionally, cell wall formation. Catalyzes the transfer of a GlcNAc subunit on undecaprenyl-pyrophosphoryl-MurNAc-pentapeptide (lipid intermediate I) to form undecaprenyl-pyrophosphoryl-MurNAc-(pentapeptide)GlcNAc (lipid intermediate II). The polypeptide is UDP-N-acetylglucosamine--N-acetylmuramyl-(pentapeptide) pyrophosphoryl-undecaprenol N-acetylglucosamine transferase (Clostridium botulinum (strain 657 / Type Ba4)).